Here is a 360-residue protein sequence, read N- to C-terminus: Photosystem II protein D1 (360 aa).

Helical transmembrane passes span 29–46 (YIGW…TATS), 118–133 (HFLL…EWEL), and 142–156 (WIFV…AASA). Histidine 118 provides a ligand contact to chlorophyll a. Tyrosine 126 lines the pheophytin a pocket. Residues aspartate 170 and glutamate 189 each coordinate [CaMn4O5] cluster. A helical membrane pass occupies residues 197-218 (FHMAGVAGVFGGSLFSAMHGSL). Histidine 198 serves as a coordination point for chlorophyll a. Residues histidine 215 and 264–265 (SF) contribute to the a quinone site. Histidine 215 is a Fe cation binding site. Histidine 272 lines the Fe cation pocket. A helical transmembrane segment spans residues 274–288 (FLALWPVVGIWLTAM). Residues histidine 332, glutamate 333, aspartate 342, and alanine 344 each contribute to the [CaMn4O5] cluster site. Positions 345–360 (SGEVLPVALTAPAVNG) are excised as a propeptide.

The protein belongs to the reaction center PufL/M/PsbA/D family. As to quaternary structure, PSII is composed of 1 copy each of membrane proteins PsbA, PsbB, PsbC, PsbD, PsbE, PsbF, PsbH, PsbI, PsbJ, PsbK, PsbL, PsbM, PsbT, PsbX, PsbY, PsbZ, Psb30/Ycf12, at least 3 peripheral proteins of the oxygen-evolving complex and a large number of cofactors. It forms dimeric complexes. The cofactor is The D1/D2 heterodimer binds P680, chlorophylls that are the primary electron donor of PSII, and subsequent electron acceptors. It shares a non-heme iron and each subunit binds pheophytin, quinone, additional chlorophylls, carotenoids and lipids. D1 provides most of the ligands for the Mn4-Ca-O5 cluster of the oxygen-evolving complex (OEC). There is also a Cl(-1) ion associated with D1 and D2, which is required for oxygen evolution. The PSII complex binds additional chlorophylls, carotenoids and specific lipids.. Tyr-161 forms a radical intermediate that is referred to as redox-active TyrZ, YZ or Y-Z. In terms of processing, C-terminally processed by CTPA; processing is essential to allow assembly of the oxygen-evolving complex and thus photosynthetic growth.

It localises to the plastid. It is found in the chloroplast thylakoid membrane. It carries out the reaction 2 a plastoquinone + 4 hnu + 2 H2O = 2 a plastoquinol + O2. Its function is as follows. Photosystem II (PSII) is a light-driven water:plastoquinone oxidoreductase that uses light energy to abstract electrons from H(2)O, generating O(2) and a proton gradient subsequently used for ATP formation. It consists of a core antenna complex that captures photons, and an electron transfer chain that converts photonic excitation into a charge separation. The D1/D2 (PsbA/PsbD) reaction center heterodimer binds P680, the primary electron donor of PSII as well as several subsequent electron acceptors. In Phaeodactylum tricornutum (strain CCAP 1055/1), this protein is Photosystem II protein D1.